A 321-amino-acid chain; its full sequence is Putative membrane-bound redox modulator Alx (321 aa).

The Periplasmic segment spans residues methionine 1–threonine 6. A helical transmembrane segment spans residues proline 7–leucine 27. The Cytoplasmic portion of the chain corresponds to glutamine 28–alanine 43. Residues tryptophan 44 to valine 64 traverse the membrane as a helical segment. At glutamine 65–leucine 89 the chain is on the periplasmic side. Residues alanine 90–leucine 110 form a helical membrane-spanning segment. The Cytoplasmic segment spans residues glutamine 111–arginine 113. The helical transmembrane segment at valine 114–serine 134 threads the bilayer. Residue tryptophan 135 is a topological domain, periplasmic. A helical transmembrane segment spans residues leucine 136 to valine 156. Residues lysine 157–glycine 198 lie on the Cytoplasmic side of the membrane. The chain crosses the membrane as a helical span at residues leucine 199–phenylalanine 219. The Periplasmic segment spans residues alanine 220–proline 225. A helical transmembrane segment spans residues alanine 226–leucine 246. Residues glycine 247–arginine 261 lie on the Cytoplasmic side of the membrane. The helical transmembrane segment at phenylalanine 262–isoleucine 282 threads the bilayer. The Periplasmic portion of the chain corresponds to valine 283–tyrosine 286. A helical membrane pass occupies residues histidine 287–isoleucine 307. Residues asparagine 308–glycine 321 lie on the Cytoplasmic side of the membrane.

This sequence belongs to the TerC family.

Its subcellular location is the cell inner membrane. Has been proposed to be a redox modulator. The protein is Putative membrane-bound redox modulator Alx (alx) of Escherichia coli O157:H7.